A 381-amino-acid chain; its full sequence is tRNA pseudouridine synthase D (381 aa).

Aspartate 81 acts as the Nucleophile in catalysis. In terms of domain architecture, TRUD spans 160–335 (GMPNYFGSQR…TLGSRRFFWV (176 aa)).

It belongs to the pseudouridine synthase TruD family.

It carries out the reaction uridine(13) in tRNA = pseudouridine(13) in tRNA. Its function is as follows. Responsible for synthesis of pseudouridine from uracil-13 in transfer RNAs. This is tRNA pseudouridine synthase D from Helicobacter pylori (strain P12).